The primary structure comprises 243 residues: Uridylate kinase (243 aa).

ATP is bound at residue 15–18 (KLSG). Residues 23–28 (GEEGFG) form an involved in allosteric activation by GTP region. Gly57 is a binding site for UMP. Residues Gly58 and Arg62 each contribute to the ATP site. Residues Asp77 and 138–145 (TGNPFFTT) contribute to the UMP site. Positions 165, 171, and 174 each coordinate ATP.

It belongs to the UMP kinase family. In terms of assembly, homohexamer.

It is found in the cytoplasm. The catalysed reaction is UMP + ATP = UDP + ADP. The protein operates within pyrimidine metabolism; CTP biosynthesis via de novo pathway; UDP from UMP (UMPK route): step 1/1. Its activity is regulated as follows. Allosterically activated by GTP. Inhibited by UTP. Catalyzes the reversible phosphorylation of UMP to UDP. This Vibrio campbellii (strain ATCC BAA-1116) protein is Uridylate kinase.